The following is a 22-amino-acid chain: Motilin (22 aa).

A compositionally biased stretch (polar residues) spans 1-11 (FVPFFTQSDIQ). The segment at 1 to 22 (FVPFFTQSDIQKMQEKERNKGQ) is disordered. Residues 12 to 22 (KMQEKERNKGQ) are compositionally biased toward basic and acidic residues.

It belongs to the motilin family.

It localises to the secreted. In terms of biological role, plays an important role in the regulation of interdigestive gastrointestinal motility and indirectly causes rhythmic contraction of duodenal and colonic smooth muscle. In Gallus gallus (Chicken), this protein is Motilin (MLN).